We begin with the raw amino-acid sequence, 50 residues long: Kappa-actitoxin-Bcs4a (50 aa).

The protein belongs to the sea anemone type 5 potassium channel toxin family. In terms of processing, contains 4 disulfide bonds.

Its subcellular location is the secreted. It localises to the nematocyst. Functionally, inhibits voltage-gated potassium channels (Kv1/KCNA). Is potent on Drosophila Shaker IR channels (IC(50)=94.25 nM), and rKv1.2/KCNA2 (IC(50)=172.59 nM), and moderately active on hKv1.3/KCNA3 (IC(50)=1006.48 nM), rKv1.6/KCNA6 (IC(50)=2245.93 nM), and Kv1.1/KCNA1 (IC(50) around 3 uM). In vivo, induces a rapid increase in swimming speed on zebrafish larvae, as well as death which occurs between 2 and 18 hours later. Also paralyzes swimming crabs (C.danae) when injected at the junction between the body and the walking leg. The protein is Kappa-actitoxin-Bcs4a of Bunodosoma caissarum (Sea anemone).